A 246-amino-acid polypeptide reads, in one-letter code: tRNA pseudouridine synthase A (246 aa).

Aspartate 52 acts as the Nucleophile in catalysis. Substrate is bound at residue tyrosine 111.

It belongs to the tRNA pseudouridine synthase TruA family. Homodimer.

It carries out the reaction uridine(38/39/40) in tRNA = pseudouridine(38/39/40) in tRNA. Functionally, formation of pseudouridine at positions 38, 39 and 40 in the anticodon stem and loop of transfer RNAs. This chain is tRNA pseudouridine synthase A, found in Rhodopseudomonas palustris (strain BisA53).